A 310-amino-acid polypeptide reads, in one-letter code: tRNA-cytidine(32) 2-sulfurtransferase (310 aa).

The PP-loop motif signature appears at 47–52 (SGGKDS). [4Fe-4S] cluster-binding residues include Cys122, Cys125, and Cys213.

It belongs to the TtcA family. As to quaternary structure, homodimer. Mg(2+) serves as cofactor. [4Fe-4S] cluster is required as a cofactor.

It localises to the cytoplasm. The enzyme catalyses cytidine(32) in tRNA + S-sulfanyl-L-cysteinyl-[cysteine desulfurase] + AH2 + ATP = 2-thiocytidine(32) in tRNA + L-cysteinyl-[cysteine desulfurase] + A + AMP + diphosphate + H(+). It participates in tRNA modification. Its function is as follows. Catalyzes the ATP-dependent 2-thiolation of cytidine in position 32 of tRNA, to form 2-thiocytidine (s(2)C32). The sulfur atoms are provided by the cysteine/cysteine desulfurase (IscS) system. This is tRNA-cytidine(32) 2-sulfurtransferase from Haemophilus influenzae (strain 86-028NP).